Reading from the N-terminus, the 93-residue chain is FMRFamide-like neuropeptides 22 (93 aa).

The signal sequence occupies residues 1 to 19 (MNRSMIALCVVLMVSLVSA). The propeptide occupies 20–46 (QVFDLDGQQLAGLEQNDARLMEQQVKR). Phenylalanine amide occurs at positions 55, 67, and 79. A propeptide spanning residues 83–93 (SGAEAVSEQDY) is cleaved from the precursor.

Belongs to the FARP (FMRFamide related peptide) family.

It is found in the secreted. In terms of biological role, FMRFamides and FMRFamide-like peptides are neuropeptides. Functionally, SPSAKWMRF-amide: Acts as a ligand for the npr-22 receptor in vitro. This chain is FMRFamide-like neuropeptides 22, found in Caenorhabditis elegans.